The following is an 890-amino-acid chain: MRQKETTATTRFSLLPGSITRFFLLLIIVLLVTMGVMVQSAVNAWLKDKSYQIVDITHAIQKRVDNWRYVTWQIYDNIAATTSPSSGEGLQETRLKQDVYYLEKPRRKTEALIFGSHDNSTLEMTQRMSTYLDTLWGAENVPWSMYYLNGQDNSLVLISTLPLKDLTSGFKESTVSDIVDSRRAEMLQQANALDERESFSNMRRLAWQNGHYFTLRTTFNQPGHLATVVAFDLPINDLIPPGMPLDSFRLEPDATATGNNDNEKEGTDSVSIHFNSTKIEISSALNSTDMRLVWQVPYGTLLLDTLQNILLPLLLNIGLLALALFGYTTFRHFSSRSTENVPSTAVNNELRILRAINEEIVSLLPLGLLVHDQESNRTVISNKIADHLLPHLNLQNITTMAEQHQGIIQATINNELYEIRMFRSQVAPRTQIFIIRDQDREVLVNKKLKQAQRLYEKNQQGRMIFMKNIGDALKEPAQSLAESAAKLNAPESKQLANQADVLVRLVDEIQLANMLADDSWKSETVLFSVQDLIDEVVPSVLPAIKRKGLQLLINNHLKAHDMRRGDRDALRRILLLLMQYAVTSTQLGKITLEVDQDESSEDRLTFRILDTGEGVSIHEMDNLHFPFINQTQNDRYGKADPLAFWLSDQLARKLGGHLNIKTRDGLGTRYSVHIKMLAADPEVEEEEERLLDDVCVMVDVTSAEIRNIVTRQLENWGATCITPDERLISQDYDIFLTDNPSNLTASGLLLSDDESGVREIGPGQLCVNFNMSNAMQEAVLQLIEVQLAQEEVTESPLGGDENAQLHASGYYALFVDTVPDDVKRLYTEAATSDFAALAQTAHRLKGVFAMLNLVPGKQLCETLEHLIREKDVPGIEKYISDIDSYVKSLL.

At 1–21 (MRQKETTATTRFSLLPGSITR) the chain is on the cytoplasmic side. A helical transmembrane segment spans residues 22–42 (FFLLLIIVLLVTMGVMVQSAV). The Periplasmic portion of the chain corresponds to 43 to 308 (NAWLKDKSYQ…GTLLLDTLQN (266 aa)). The chain crosses the membrane as a helical span at residues 309–329 (ILLPLLLNIGLLALALFGYTT). Over 330–890 (FRHFSSRSTE…DIDSYVKSLL (561 aa)) the chain is Cytoplasmic. The histidine-like kinase stretch occupies residues 468-678 (NIGDALKEPA…RYSVHIKMLA (211 aa)). One can recognise an HPt domain in the interval 803–890 (AQLHASGYYA…DIDSYVKSLL (88 aa)). Phosphohistidine is present on H842.

It belongs to the RcsD family. Interacts with RcsC and RcsB. Has a higher affinity for RcsB than for RcsC. In terms of processing, phosphorylated by RcsC.

The protein resides in the cell inner membrane. Functionally, component of the Rcs signaling system, which controls transcription of numerous genes. RcsD is a phosphotransfer intermediate between the sensor kinase RcsC and the response regulator RcsB. It acquires a phosphoryl group from RcsC and transfers it to RcsB. The system controls expression of genes involved in colanic acid capsule synthesis, biofilm formation and cell division. The protein is Phosphotransferase RcsD of Escherichia coli (strain K12).